The following is an 819-amino-acid chain: Metabotropic glutamate receptor-like protein O (819 aa).

An N-terminal signal peptide occupies residues 1 to 19; the sequence is MKKVFFLILILNCVVGALS. Over 20–394 the chain is Extracellular; the sequence is NKNICKISLL…FVDSYSNSIK (375 aa). N-linked (GlcNAc...) asparagine glycosylation is found at N99, N185, N277, N295, N330, and N370. The helical transmembrane segment at 395–415 threads the bilayer; that stretch reads ISILSVSIFCIFICVLGMIFI. Over 416–428 the chain is Cytoplasmic; sequence TVLRNARILKSSS. A helical transmembrane segment spans residues 429–449; that stretch reads PSFLLLILFGCIVIFTGCILF. The Extracellular portion of the chain corresponds to 450 to 457; sequence SQPATDKT. A helical transmembrane segment spans residues 458–478; sequence CQGRVWLLSIGYTIFLGSLLI. Over 479–503 the chain is Cytoplasmic; it reads KNWRVWLLFDNKKLRKRSITNWKLY. Residues 504–524 traverse the membrane as a helical segment; sequence PWVAGILVVDVLILALWQGLG. The Extracellular segment spans residues 525–550; that stretch reads DIKSESRIIGTSFYQYTNVCTNNDQG. Residues 551–571 form a helical membrane-spanning segment; that stretch reads SIALYILLAFHGLKLLGTCFI. At 572–587 the chain is on the cytoplasmic side; it reads SFKIKLVDIEEFNESK. A helical transmembrane segment spans residues 588 to 608; that stretch reads PITTSVFIILFCIFTIILLIA. Residues 609–624 are Extracellular-facing; that stretch reads PSSSSSSASSPQPIAS. A helical membrane pass occupies residues 625 to 645; it reads LETIICICSVTTTAISIGLLF. The Cytoplasmic portion of the chain corresponds to 646-819; sequence GDKIYFITTQ…NNENEIISDT (174 aa). A disordered region spans residues 674–819; it reads KDCDDDDDDS…NNENEIISDT (146 aa). The segment covering 695–712 has biased composition (basic residues); that stretch reads NKNKNKNRNQSEKKKRPN. A compositionally biased stretch (polar residues) spans 726 to 739; that stretch reads ESVVFNPPSNNDLT. The segment covering 748 to 768 has biased composition (basic and acidic residues); it reads GIKEGHGHDSENNDEYEHHED. Positions 769–798 are enriched in acidic residues; the sequence is EDHEYEGEGEDEDHEDEYEVENDIEQEQEQ. Positions 799 to 808 are enriched in low complexity; it reads ESSNISISTK.

It in the N-terminal section; belongs to the BMP lipoprotein family. In the C-terminal section; belongs to the G-protein coupled receptor 3 family. GABA-B receptor subfamily.

It is found in the membrane. The protein is Metabotropic glutamate receptor-like protein O (grlO) of Dictyostelium discoideum (Social amoeba).